The primary structure comprises 278 residues: TATA box-binding protein-associated factor RNA polymerase I subunit D (278 aa).

2 disordered regions span residues 19–71 (LANR…SSFE) and 88–115 (KKRY…RRNP). The residue at position 23 (Ser23) is a Phosphoserine. Basic residues-rich tracts occupy residues 43–53 (REKRNPIRKFV) and 88–99 (KKRYKKKKKKRY). Phosphoserine occurs at positions 138 and 234.

In terms of assembly, component of the transcription factor SL1/TIF-IB complex, composed of TBP and at least TAF1A, TAF1B, TAF1C and TAF1D. Interacts with UBTF.

Its subcellular location is the nucleus. Its function is as follows. Component of the transcription factor SL1/TIF-IB complex, which is involved in the assembly of the PIC (preinitiation complex) during RNA polymerase I-dependent transcription. The rate of PIC formation probably is primarily dependent on the rate of association of SL1/TIF-IB with the rDNA promoter. SL1/TIF-IB is involved in stabilization of nucleolar transcription factor 1/UBTF on rDNA. Formation of SL1/TIF-IB excludes the association of TBP with TFIID subunits. The sequence is that of TATA box-binding protein-associated factor RNA polymerase I subunit D (TAF1D) from Pongo abelii (Sumatran orangutan).